A 348-amino-acid polypeptide reads, in one-letter code: WRKY transcription factor WRKY71 (348 aa).

The stretch at 50-84 (VAALEAELKRMGAENRQLSEMLAAVAAKYEALQSQ) forms a coiled coil. Disordered stretches follow at residues 91–141 (ASAN…APHH) and 246–287 (GEHN…APVV). Positions 102-114 (NQSSTSEGGSVSP) are enriched in low complexity. The short motif at 116-122 (RKRKSES) is the Nuclear localization signal element. A compositionally biased stretch (pro residues) spans 126-136 (SPPPPPPPHPH). The segment at residues 187 to 253 (DLSLVVKDGY…YEGEHNHGQP (67 aa)) is a DNA-binding region (WRKY). The segment at 267 to 348 (SGKSAGKPPH…RILELSPTKD (82 aa)) is transcription repression of gibberellic acid (GA)-induced promoters. Pro residues predominate over residues 275–286 (PHAPAAAPPAPV).

It belongs to the WRKY group II-a family. In terms of assembly, interacts with WRKY51; this interaction promotes W box binding of the complex WRKY51/WRKY71 in a zinc ion-dependent manner. In terms of tissue distribution, highly expressed in aleurone cells. In seeds, predominantly present in the plumule, radicle and scutellum of the embryo. Expressed in roots, stems, young leaves and spikelets.

It is found in the nucleus. Transcription repressor. Interacts specifically with the W box (5'-(T)TGAC[CT]-3'), a frequently occurring elicitor-responsive cis-acting element. Represses specifically gibberellic acid (GA)-induced promoters in aleurone cells, probably by interfering with GAM1. Regulates, probably indirectly, the activation of defense-related genes such as GF14E during defense response. Modulates plant innate immunity against X.oryzae pv. oryzae (Xoo). Confers resistance to the virulent bacterial pathogen X.oryzae pv. oryzae (Xoo) 13751, probably via the regulation of NPR1 and PR1b defense signaling pathways. The polypeptide is WRKY transcription factor WRKY71 (Oryza sativa subsp. indica (Rice)).